The sequence spans 406 residues: Proteasome-activating nucleotidase 1 (406 aa).

A compositionally biased stretch (acidic residues) spans methionine 1–tyrosine 12. The disordered stretch occupies residues methionine 1–aspartate 20. A coiled-coil region spans residues tyrosine 12–serine 70. ATP is bound by residues glycine 192–leucine 197 and histidine 331. A disordered region spans residues alanine 385–alanine 406. The interval threonine 404–alanine 406 is docks into pockets in the proteasome alpha-ring to cause gate opening.

It belongs to the AAA ATPase family. Homohexamer. The hexameric complex has a two-ring architecture resembling a top hat that caps the 20S proteasome core at one or both ends. Upon ATP-binding, the C-terminus of PAN interacts with the alpha-rings of the proteasome core by binding to the intersubunit pockets.

It localises to the cytoplasm. Its function is as follows. ATPase which is responsible for recognizing, binding, unfolding and translocation of substrate proteins into the archaeal 20S proteasome core particle. Is essential for opening the gate of the 20S proteasome via an interaction with its C-terminus, thereby allowing substrate entry and access to the site of proteolysis. Thus, the C-termini of the proteasomal ATPase function like a 'key in a lock' to induce gate opening and therefore regulate proteolysis. Unfolding activity requires energy from ATP hydrolysis, whereas ATP binding alone promotes ATPase-20S proteasome association which triggers gate opening, and supports translocation of unfolded substrates. In Halobacterium salinarum (strain ATCC 700922 / JCM 11081 / NRC-1) (Halobacterium halobium), this protein is Proteasome-activating nucleotidase 1.